The primary structure comprises 238 residues: Probable 2-phosphosulfolactate phosphatase (238 aa).

It belongs to the ComB family. Mg(2+) serves as cofactor.

The catalysed reaction is (2R)-O-phospho-3-sulfolactate + H2O = (2R)-3-sulfolactate + phosphate. This is Probable 2-phosphosulfolactate phosphatase from Clostridium botulinum (strain Alaska E43 / Type E3).